The chain runs to 420 residues: Serine--tRNA ligase (420 aa).

229–231 serves as a coordination point for L-serine; sequence TAE. Position 260–262 (260–262) interacts with ATP; that stretch reads RAE. An L-serine-binding site is contributed by glutamate 283. 347 to 350 is a binding site for ATP; that stretch reads EISS. Serine 382 is an L-serine binding site.

It belongs to the class-II aminoacyl-tRNA synthetase family. Type-1 seryl-tRNA synthetase subfamily. In terms of assembly, homodimer. The tRNA molecule binds across the dimer.

The protein localises to the cytoplasm. The enzyme catalyses tRNA(Ser) + L-serine + ATP = L-seryl-tRNA(Ser) + AMP + diphosphate + H(+). The catalysed reaction is tRNA(Sec) + L-serine + ATP = L-seryl-tRNA(Sec) + AMP + diphosphate + H(+). The protein operates within aminoacyl-tRNA biosynthesis; selenocysteinyl-tRNA(Sec) biosynthesis; L-seryl-tRNA(Sec) from L-serine and tRNA(Sec): step 1/1. Catalyzes the attachment of serine to tRNA(Ser). Is also able to aminoacylate tRNA(Sec) with serine, to form the misacylated tRNA L-seryl-tRNA(Sec), which will be further converted into selenocysteinyl-tRNA(Sec). The sequence is that of Serine--tRNA ligase from Caldicellulosiruptor saccharolyticus (strain ATCC 43494 / DSM 8903 / Tp8T 6331).